An 80-amino-acid chain; its full sequence is Sulfur carrier protein TusA (80 aa).

Cys-17 serves as the catalytic Cysteine persulfide intermediate.

This sequence belongs to the sulfur carrier protein TusA family.

It localises to the cytoplasm. Its function is as follows. Sulfur carrier protein which probably makes part of a sulfur-relay system. In Pseudomonas putida (strain W619), this protein is Sulfur carrier protein TusA.